Consider the following 152-residue polypeptide: Small ribosomal subunit protein bS16 (152 aa).

Over residues 118 to 130 the composition is skewed to basic and acidic residues; it reads AEKHKAKASEKKA. A disordered region spans residues 118–152; the sequence is AEKHKAKASEKKAAAAASADEAGSAAADDAEGSES. Over residues 131 to 144 the composition is skewed to low complexity; it reads AAAASADEAGSAAA.

This sequence belongs to the bacterial ribosomal protein bS16 family.

This is Small ribosomal subunit protein bS16 from Beutenbergia cavernae (strain ATCC BAA-8 / DSM 12333 / CCUG 43141 / JCM 11478 / NBRC 16432 / NCIMB 13614 / HKI 0122).